Consider the following 157-residue polypeptide: SsrA-binding protein (157 aa).

It belongs to the SmpB family.

The protein resides in the cytoplasm. In terms of biological role, required for rescue of stalled ribosomes mediated by trans-translation. Binds to transfer-messenger RNA (tmRNA), required for stable association of tmRNA with ribosomes. tmRNA and SmpB together mimic tRNA shape, replacing the anticodon stem-loop with SmpB. tmRNA is encoded by the ssrA gene; the 2 termini fold to resemble tRNA(Ala) and it encodes a 'tag peptide', a short internal open reading frame. During trans-translation Ala-aminoacylated tmRNA acts like a tRNA, entering the A-site of stalled ribosomes, displacing the stalled mRNA. The ribosome then switches to translate the ORF on the tmRNA; the nascent peptide is terminated with the 'tag peptide' encoded by the tmRNA and targeted for degradation. The ribosome is freed to recommence translation, which seems to be the essential function of trans-translation. This Chromohalobacter salexigens (strain ATCC BAA-138 / DSM 3043 / CIP 106854 / NCIMB 13768 / 1H11) protein is SsrA-binding protein.